The following is a 218-amino-acid chain: Ribose-5-phosphate isomerase A (218 aa).

Residues 28-31, 81-84, and 94-97 contribute to the substrate site; these read TGST, DGAD, and KGGG. The active-site Proton acceptor is E103. K121 is a binding site for substrate.

Belongs to the ribose 5-phosphate isomerase family. As to quaternary structure, homodimer.

The catalysed reaction is aldehydo-D-ribose 5-phosphate = D-ribulose 5-phosphate. It functions in the pathway carbohydrate degradation; pentose phosphate pathway; D-ribose 5-phosphate from D-ribulose 5-phosphate (non-oxidative stage): step 1/1. Functionally, catalyzes the reversible conversion of ribose-5-phosphate to ribulose 5-phosphate. The chain is Ribose-5-phosphate isomerase A from Sodalis glossinidius (strain morsitans).